Here is a 492-residue protein sequence, read N- to C-terminus: Cytochrome P450 26A1 (492 aa).

Cys437 is a heme binding site.

Belongs to the cytochrome P450 family. Heme serves as cofactor.

The protein resides in the endoplasmic reticulum membrane. It is found in the microsome membrane. The enzyme catalyses all-trans-retinoate + reduced [NADPH--hemoprotein reductase] + O2 = all-trans-(4S)-hydroxyretinoate + oxidized [NADPH--hemoprotein reductase] + H2O + H(+). It carries out the reaction all-trans-(4S)-hydroxyretinoate + reduced [NADPH--hemoprotein reductase] + O2 = all-trans-(4S,16)-dihydroxyretinoate + oxidized [NADPH--hemoprotein reductase] + H2O + H(+). It catalyses the reaction all-trans-retinoate + reduced [NADPH--hemoprotein reductase] + O2 = all-trans-18-hydroxyretinoate + oxidized [NADPH--hemoprotein reductase] + H2O + H(+). Functionally, a cytochrome P450 monooxygenase involved in the metabolism of retinoates (RAs), the active metabolites of vitamin A, and critical signaling molecules in animals. RAs exist as at least four different isomers: all-trans-RA (atRA), 9-cis-RA, 13-cis-RA, and 9,13-dicis-RA, where atRA is considered to be the biologically active isomer, although 9-cis-RA and 13-cis-RA also have activity. Catalyzes the hydroxylation of atRA primarily at C-4 and C-18, thereby contributing to the regulation of atRA homeostasis and signaling. Hydroxylation of atRA limits its biological activity and initiates a degradative process leading to its eventual elimination. Involved in the convertion of atRA to all-trans-4-oxo-RA. Able to metabolize other RAs such as 9-cis, 13-cis and 9,13-di-cis RA. Can oxidize all-trans-13,14-dihydroretinoate (DRA) to metabolites which could include all-trans-4-oxo-DRA, all-trans-4-hydroxy-DRA, all-trans-5,8-epoxy-DRA, and all-trans-18-hydroxy-DRA. May play a role in the oxidative metabolism of xenobiotics such as tazarotenic acid. This is Cytochrome P450 26A1 (CYP26A1) from Gallus gallus (Chicken).